We begin with the raw amino-acid sequence, 583 residues long: Putative rhophilin-2-like protein RHPN2P1 (583 aa).

Positions 26-375 constitute a BRO1 domain; the sequence is PLIPLGLKET…RLTYAQHQED (350 aa). One can recognise a PDZ domain in the interval 412 to 490; it reads RSNRFTAEEG…DEIEMKVVSL (79 aa).

The sequence is that of Putative rhophilin-2-like protein RHPN2P1 (RHPN2P1) from Homo sapiens (Human).